The following is a 184-amino-acid chain: Large ribosomal subunit protein bL9 (184 aa).

Residues 160–184 (LQNQKSEQQEAEQDANKEATDGDDS) are disordered. Residues 173-184 (DANKEATDGDDS) show a composition bias toward basic and acidic residues.

The protein belongs to the bacterial ribosomal protein bL9 family.

In terms of biological role, binds to the 23S rRNA. The polypeptide is Large ribosomal subunit protein bL9 (Wolbachia pipientis wMel).